Here is a 179-residue protein sequence, read N- to C-terminus: Translation initiation factor IF-3 (179 aa).

Belongs to the IF-3 family. As to quaternary structure, monomer.

The protein localises to the cytoplasm. In terms of biological role, IF-3 binds to the 30S ribosomal subunit and shifts the equilibrium between 70S ribosomes and their 50S and 30S subunits in favor of the free subunits, thus enhancing the availability of 30S subunits on which protein synthesis initiation begins. The protein is Translation initiation factor IF-3 of Buchnera aphidicola subsp. Acyrthosiphon pisum (strain 5A).